The chain runs to 297 residues: Putative S-adenosyl-L-methionine-dependent methyltransferase MSMEG_0614/MSMEI_0598 (297 aa).

S-adenosyl-L-methionine is bound by residues D125 and 154–155 (DL).

This sequence belongs to the UPF0677 family.

In terms of biological role, exhibits S-adenosyl-L-methionine-dependent methyltransferase activity. This is Putative S-adenosyl-L-methionine-dependent methyltransferase MSMEG_0614/MSMEI_0598 from Mycolicibacterium smegmatis (strain ATCC 700084 / mc(2)155) (Mycobacterium smegmatis).